The following is a 295-amino-acid chain: Acetylglutamate kinase (295 aa).

Substrate contacts are provided by residues 66–67, R88, and N193; that span reads GG.

This sequence belongs to the acetylglutamate kinase family. ArgB subfamily.

Its subcellular location is the cytoplasm. The catalysed reaction is N-acetyl-L-glutamate + ATP = N-acetyl-L-glutamyl 5-phosphate + ADP. Its pathway is amino-acid biosynthesis; L-arginine biosynthesis; N(2)-acetyl-L-ornithine from L-glutamate: step 2/4. Functionally, catalyzes the ATP-dependent phosphorylation of N-acetyl-L-glutamate. This chain is Acetylglutamate kinase, found in Rhizobium etli (strain CIAT 652).